Here is a 1159-residue protein sequence, read N- to C-terminus: Calcium-activated potassium channel subunit alpha-1 (1159 aa).

The Extracellular segment spans residues 1-24 (EPNMDALIIPVTMEVPCDSRGQRM). A helical membrane pass occupies residues 25–45 (WWAFLASSMVTFFGGLFIILL). Topologically, residues 46 to 116 (WRTLKYLWTV…MISAQTLTGR (71 aa)) are cytoplasmic. S-palmitoyl cysteine attachment occurs at residues cysteine 56, cysteine 57, and cysteine 59. A helical membrane pass occupies residues 117–137 (VLVVLVFALSIGALVIYFIDS). At 138–152 (SNPIESCQNFYKDFT) the chain is on the extracellular side. The chain crosses the membrane as a helical span at residues 153–173 (LQIDMAFNVFFLLYFGLRFIA). At 174 to 177 (ANDN) the chain is on the cytoplasmic side. A helical transmembrane segment spans residues 178-198 (LWFWLEVNSVVDFFTVPPVFV). Topologically, residues 199 to 202 (SVYL) are extracellular. A helical; Voltage-sensor transmembrane segment spans residues 203–223 (NRSWLGLRFLRALRLIQFSEI). Residues 224–238 (LQFLNILKTSNSIKL) lie on the Cytoplasmic side of the membrane. Residues 239–259 (VNLLSIFISTWLTAAGFIHLV) traverse the membrane as a helical segment. Residues 260–273 (ENSGDPWENFQNSQ) are Extracellular-facing. An intramembrane region (pore-forming) is located at residues 274-296 (ALTYWECVYLLMVTMSTVGYGDV). Residues 290–293 (TVGY) carry the Selectivity for potassium motif. Residues 297-305 (YAKTTPGGL) lie on the Extracellular side of the membrane. A helical membrane pass occupies residues 306–326 (FIVFFILGGLAMFASYVPEII). Topologically, residues 327–1159 (EIIGNRKKYG…PPIREVEDEC (833 aa)) are cytoplasmic. The RCK N-terminal 1 domain occupies 345 to 487 (RKHIVVCGHI…WNWKEGDDAI (143 aa)). The Mg(2+) site is built by glutamate 377, glutamine 400, and glutamate 402. The segment at 494–514 (LGFIAQSCLAQGLSTMLANLF) is segment S7. The segment S8 stretch occupies residues 551-571 (LSFPTVCELCFVKLKLLMIAI). The tract at residues 615-619 (CKACH) is heme-binding motif. The segment at 639–668 (EQPSTLSPKKKQRNGGMRNSPSSSPKLMRH) is disordered. Phosphothreonine is present on threonine 643. Phosphoserine occurs at positions 645, 658, and 662. A segment S9 region spans residues 717–737 (VLSGHVVVCIFGHVSSALIGL). Positions 719–863 (SGHVVVCIFG…MDKSSPDNSP (145 aa)) constitute an RCK N-terminal 2 domain. Residue threonine 850 is modified to Phosphothreonine. 2 positions are modified to phosphoserine: serine 858 and serine 862. A Calcium bowl motif is present at residues 883–905 (TELVNDTNVQFLDQDDDDDPDTE). Ca(2+) contacts are provided by glutamine 892, aspartate 895, aspartate 898, and aspartate 900. The segment at 912 to 932 (FACGTAFAVSVLDSLMSATYF) is segment S10. The segment covering 1066-1091 (RASLSHSSHSSQSSSKKSSSVHSIPS) has biased composition (low complexity). A disordered region spans residues 1066-1124 (RASLSHSSHSSQSSSKKSSSVHSIPSTANRQNRPKSRESRDKQTEKKWFTDEPDNAYPR). Positions 1100–1115 (KSRESRDKQTEKKWFT) are enriched in basic and acidic residues. Phosphoserine is present on residues serine 1101 and serine 1104.

This sequence belongs to the potassium channel family. Calcium-activated (TC 1.A.1.3) subfamily. KCa1.1/KCNMA1 sub-subfamily. In terms of assembly, homotetramer; which constitutes the calcium-activated potassium channel. Interacts with beta subunits KCNMB1, KCNMB2, KCNMB3 and KCNMB4. Interacts with gamma subunits LRRC26, LRRC38, LRRC52 and LRRC55. Beta and gamma subunits are accessory, and modulate its activity. Interacts with RAB11B. Post-translationally, phosphorylated. Phosphorylation by kinases such as PKA and/or PKG. In smooth muscles, phosphorylation affects its activity. Palmitoylation by ZDHHC22 and ZDHHC23 within the intracellular linker between the S0 and S1 transmembrane domains regulates localization to the plasma membrane. Depalmitoylated by LYPLA1 and LYPLAL1, leading to retard exit from the trans-Golgi network. Expressed in all vascular and smooth muscles.

It localises to the cell membrane. It catalyses the reaction K(+)(in) = K(+)(out). With respect to regulation, ethanol and carbon monoxide-bound heme increase channel activation. Heme inhibits channel activation. Potassium channel activated by both membrane depolarization or increase in cytosolic Ca(2+) that mediates export of K(+). It is also activated by the concentration of cytosolic Mg(2+). Its activation dampens the excitatory events that elevate the cytosolic Ca(2+) concentration and/or depolarize the cell membrane. It therefore contributes to repolarization of the membrane potential. Plays a key role in controlling excitability in a number of systems, such as regulation of the contraction of smooth muscle, the tuning of hair cells in the cochlea, regulation of transmitter release, and innate immunity. In smooth muscles, its activation by high level of Ca(2+), caused by ryanodine receptors in the sarcoplasmic reticulum, regulates the membrane potential. In cochlea cells, its number and kinetic properties partly determine the characteristic frequency of each hair cell and thereby helps to establish a tonotopic map. Kinetics of KCNMA1 channels are determined by alternative splicing, phosphorylation status and its combination with modulating beta subunits. Highly sensitive to both iberiotoxin (IbTx) and charybdotoxin (CTX). In Canis lupus familiaris (Dog), this protein is Calcium-activated potassium channel subunit alpha-1 (KCNMA1).